The sequence spans 190 residues: Peptide methionine sulfoxide reductase MsrA (190 aa).

Cys21 is a catalytic residue.

It belongs to the MsrA Met sulfoxide reductase family.

It catalyses the reaction L-methionyl-[protein] + [thioredoxin]-disulfide + H2O = L-methionyl-(S)-S-oxide-[protein] + [thioredoxin]-dithiol. The enzyme catalyses [thioredoxin]-disulfide + L-methionine + H2O = L-methionine (S)-S-oxide + [thioredoxin]-dithiol. Functionally, has an important function as a repair enzyme for proteins that have been inactivated by oxidation. Catalyzes the reversible oxidation-reduction of methionine sulfoxide in proteins to methionine. The polypeptide is Peptide methionine sulfoxide reductase MsrA (Polynucleobacter asymbioticus (strain DSM 18221 / CIP 109841 / QLW-P1DMWA-1) (Polynucleobacter necessarius subsp. asymbioticus)).